We begin with the raw amino-acid sequence, 98 residues long: Late cornified envelope-like proline-rich protein 1 (98 aa).

The disordered stretch occupies residues 1 to 26; it reads MSSDDKSKSNDPKTEPKNCDPKCEQK.

The protein belongs to the cornifin (SPRR) family.

In Homo sapiens (Human), this protein is Late cornified envelope-like proline-rich protein 1 (LELP1).